The sequence spans 110 residues: Parvalbumin alpha (110 aa).

2 EF-hand domains span residues 39 to 74 (KNAK…FAPE) and 78 to 110 (LSEK…VANS). Residues Asp52, Asp54, Ser56, Phe58, Glu60, Glu63, Asp91, Asp93, Asp95, Lys97, and Glu102 each contribute to the Ca(2+) site.

Belongs to the parvalbumin family.

In muscle, parvalbumin is thought to be involved in relaxation after contraction. It binds two calcium ions. This chain is Parvalbumin alpha, found in Callorhinchus milii (Ghost shark).